We begin with the raw amino-acid sequence, 154 residues long: Transcriptional repressor NrdR (154 aa).

A zinc finger lies at 3 to 34; it reads CPFCRHPDSRVVDSRETDEGQAIRRRRSCPEC. The ATP-cone domain occupies 46 to 136; the sequence is LAVVKRSGVT…VYRSFESAAD (91 aa).

This sequence belongs to the NrdR family. The cofactor is Zn(2+).

Functionally, negatively regulates transcription of bacterial ribonucleotide reductase nrd genes and operons by binding to NrdR-boxes. The polypeptide is Transcriptional repressor NrdR (Mycobacterium sp. (strain JLS)).